A 139-amino-acid chain; its full sequence is Ribonuclease P protein component (139 aa).

A disordered region spans residues lysine 120 to arginine 139.

It belongs to the RnpA family. In terms of assembly, consists of a catalytic RNA component (M1 or rnpB) and a protein subunit.

It carries out the reaction Endonucleolytic cleavage of RNA, removing 5'-extranucleotides from tRNA precursor.. RNaseP catalyzes the removal of the 5'-leader sequence from pre-tRNA to produce the mature 5'-terminus. It can also cleave other RNA substrates such as 4.5S RNA. The protein component plays an auxiliary but essential role in vivo by binding to the 5'-leader sequence and broadening the substrate specificity of the ribozyme. This Chlamydia pneumoniae (Chlamydophila pneumoniae) protein is Ribonuclease P protein component.